A 96-amino-acid polypeptide reads, in one-letter code: Large ribosomal subunit protein eL43 (96 aa).

Residues 41 to 62 (CPVCAFPKLKRAGTSIWVCEKC) form a C4-type zinc finger.

Belongs to the eukaryotic ribosomal protein eL43 family. Requires Zn(2+) as cofactor.

The chain is Large ribosomal subunit protein eL43 from Methanococcus maripaludis (strain C5 / ATCC BAA-1333).